A 72-amino-acid chain; its full sequence is MVCIPCIVIPVLLWIFKKFLEPYIYPVVSRIWPKKAVQQSGDKNMSKVDCKGAGTNGLPTKGPTEVSDKKKD.

The necessary for its localzation to the endoplasmic reticulum and lipid droplets stretch occupies residues 1-33; sequence MVCIPCIVIPVLLWIFKKFLEPYIYPVVSRIWP. Residues 36–72 are disordered; the sequence is AVQQSGDKNMSKVDCKGAGTNGLPTKGPTEVSDKKKD.

It belongs to the UPF0729 family. In terms of assembly, interacts with DERL1 and AMFR. Post-translationally, undergoes ER-associated degradation (ERAD).

The protein resides in the endoplasmic reticulum. The protein localises to the lipid droplet. In terms of biological role, may activate the NF-kappa-B signaling pathway. The polypeptide is UPF0729 protein C18orf32 homolog (Mus musculus (Mouse)).